Here is a 310-residue protein sequence, read N- to C-terminus: Aspartate carbamoyltransferase catalytic subunit (310 aa).

Arg-58 and Thr-59 together coordinate carbamoyl phosphate. Lys-86 lines the L-aspartate pocket. 3 residues coordinate carbamoyl phosphate: Arg-108, His-137, and Gln-140. 2 residues coordinate L-aspartate: Arg-170 and Arg-225. Residues Gly-264 and Pro-265 each coordinate carbamoyl phosphate.

It belongs to the aspartate/ornithine carbamoyltransferase superfamily. ATCase family. Heterododecamer (2C3:3R2) of six catalytic PyrB chains organized as two trimers (C3), and six regulatory PyrI chains organized as three dimers (R2).

It catalyses the reaction carbamoyl phosphate + L-aspartate = N-carbamoyl-L-aspartate + phosphate + H(+). It participates in pyrimidine metabolism; UMP biosynthesis via de novo pathway; (S)-dihydroorotate from bicarbonate: step 2/3. Its function is as follows. Catalyzes the condensation of carbamoyl phosphate and aspartate to form carbamoyl aspartate and inorganic phosphate, the committed step in the de novo pyrimidine nucleotide biosynthesis pathway. This chain is Aspartate carbamoyltransferase catalytic subunit, found in Coxiella burnetii (strain CbuG_Q212) (Coxiella burnetii (strain Q212)).